We begin with the raw amino-acid sequence, 1004 residues long: Kinesin-like protein KIN-14R (1004 aa).

Disordered regions lie at residues 1–21 (MEEE…RIGD), 61–90 (PYVD…MQHD), and 110–169 (ELFS…ATMG). Residues 63–75 (VDDDDDGNSEEEN) show a composition bias toward acidic residues. Over residues 115–125 (PSPPQGPPSPS) the composition is skewed to pro residues. Coiled-coil stretches lie at residues 189–230 (CGQL…AQAS) and 266–338 (LNDL…LYNK). Residues 345-671 (NIRVFCRCRP…LNFASRVRGI (327 aa)) form the Kinesin motor domain. 428–435 (GQTGTGKT) serves as a coordination point for ATP. A coiled-coil region spans residues 691-742 (MAGRAKQDSKNKDAQIKSMEETIQSLEAKNKAKDLLTMNLQEKIKELEAQLL). Disordered regions lie at residues 759–791 (DHLH…STAE) and 946–1004 (SGRR…RQLN). Positions 948-958 (RRAGAGVAGTT) are enriched in low complexity. Residues 995–1004 (NNGTSLRQLN) show a composition bias toward polar residues.

Belongs to the TRAFAC class myosin-kinesin ATPase superfamily. Kinesin family. KIN-14 subfamily.

The protein is Kinesin-like protein KIN-14R of Oryza sativa subsp. japonica (Rice).